The following is a 175-amino-acid chain: Bacterial proteasome activator (175 aa).

Residues 152-175 (LPPGIQVPGAQRGGATHPGTGQYL) are disordered. The HbYX motif signature appears at 173-175 (QYL).

Belongs to the Bpa family. In terms of assembly, forms a homooligomeric, either hexameric or heptameric, ring-like structure which stacks co-axially with the proteasomal alpha-rings.

In terms of biological role, interacts with the core proteasome alpha-subunit (PrcA) through its C-terminal hydrophobic-tyrosine-X motif (HbYX motif). Interaction of Bpa with the proteasome stimulates proteasomal peptidase and casein degradation activity, which suggests Bpa could play a role in the removal of non-native or damaged proteins by influencing the conformation of the proteasome complex upon interaction. The chain is Bacterial proteasome activator from Mycolicibacterium smegmatis (strain ATCC 700084 / mc(2)155) (Mycobacterium smegmatis).